Reading from the N-terminus, the 74-residue chain is Protein krueppel (74 aa).

4 consecutive C2H2-type zinc fingers follow at residues 1-4 (ERTH), 10-32 (FECS…MRLH), 38-60 (YHCT…LRVH), and 66-74 (YACELCASR).

The protein belongs to the krueppel C2H2-type zinc-finger protein family.

The protein resides in the nucleus. Krueppel is a gap class segmentation protein. The protein is Protein krueppel (Kr) of Euscelis plebejus (Leafhopper).